We begin with the raw amino-acid sequence, 339 residues long: Dihydroorotate dehydrogenase (quinone) (339 aa).

Residues 62-66 (AGMDK) and threonine 86 contribute to the FMN site. Residue lysine 66 coordinates substrate. Residue 111-115 (NRMGF) participates in substrate binding. 2 residues coordinate FMN: asparagine 139 and asparagine 172. Residue asparagine 172 coordinates substrate. Serine 175 acts as the Nucleophile in catalysis. Asparagine 177 provides a ligand contact to substrate. The FMN site is built by lysine 217 and threonine 245. Residue 246–247 (NT) participates in substrate binding. Residues glycine 268, glycine 297, and 318 to 319 (YS) each bind FMN.

It belongs to the dihydroorotate dehydrogenase family. Type 2 subfamily. Monomer. It depends on FMN as a cofactor.

It localises to the cell membrane. The enzyme catalyses (S)-dihydroorotate + a quinone = orotate + a quinol. It participates in pyrimidine metabolism; UMP biosynthesis via de novo pathway; orotate from (S)-dihydroorotate (quinone route): step 1/1. Functionally, catalyzes the conversion of dihydroorotate to orotate with quinone as electron acceptor. In Shewanella pealeana (strain ATCC 700345 / ANG-SQ1), this protein is Dihydroorotate dehydrogenase (quinone).